A 236-amino-acid polypeptide reads, in one-letter code: Small ribosomal subunit protein uS3 (236 aa).

Residues 39–107 (IREFLTEELK…DTSLNIVEVR (69 aa)) enclose the KH type-2 domain. The interval 214–236 (ASERRAVEGDNQGSSSNRRRENA) is disordered.

This sequence belongs to the universal ribosomal protein uS3 family. Part of the 30S ribosomal subunit. Forms a tight complex with proteins S10 and S14.

In terms of biological role, binds the lower part of the 30S subunit head. Binds mRNA in the 70S ribosome, positioning it for translation. This chain is Small ribosomal subunit protein uS3, found in Brucella anthropi (strain ATCC 49188 / DSM 6882 / CCUG 24695 / JCM 21032 / LMG 3331 / NBRC 15819 / NCTC 12168 / Alc 37) (Ochrobactrum anthropi).